Consider the following 417-residue polypeptide: Tryptophan synthase beta chain (417 aa).

An N6-(pyridoxal phosphate)lysine modification is found at lysine 99.

The protein belongs to the TrpB family. In terms of assembly, tetramer of two alpha and two beta chains. It depends on pyridoxal 5'-phosphate as a cofactor.

It carries out the reaction (1S,2R)-1-C-(indol-3-yl)glycerol 3-phosphate + L-serine = D-glyceraldehyde 3-phosphate + L-tryptophan + H2O. It participates in amino-acid biosynthesis; L-tryptophan biosynthesis; L-tryptophan from chorismate: step 5/5. In terms of biological role, the beta subunit is responsible for the synthesis of L-tryptophan from indole and L-serine. This Corynebacterium glutamicum (strain R) protein is Tryptophan synthase beta chain.